Here is a 288-residue protein sequence, read N- to C-terminus: Prepilin leader peptidase/N-methyltransferase (288 aa).

The chain crosses the membrane as a helical span at residues 14–34; the sequence is FITLATVLGLLVGSFLNVVVY. Zn(2+)-binding residues include cysteine 71, cysteine 74, cysteine 96, and cysteine 99. 6 consecutive transmembrane segments (helical) span residues 103–123, 127–147, 158–178, 182–202, 227–247, and 254–274; these read ISVR…VVAW, ASVE…LSLI, IVLP…WVPL, VCGA…FKLV, VLPL…VYLL, and MGTA…AVLW.

Belongs to the peptidase A24 family. Zn(2+) is required as a cofactor.

Its subcellular location is the cell inner membrane. The enzyme catalyses Typically cleaves a -Gly-|-Phe- bond to release an N-terminal, basic peptide of 5-8 residues from type IV prepilin, and then N-methylates the new N-terminal amino group, the methyl donor being S-adenosyl-L-methionine.. In terms of biological role, plays an essential role in type IV pili and type II pseudopili formation by proteolytically removing the leader sequence from substrate proteins and subsequently monomethylating the alpha-amino group of the newly exposed N-terminal phenylalanine. This chain is Prepilin leader peptidase/N-methyltransferase (pilD), found in Pseudomonas putida (Arthrobacter siderocapsulatus).